The sequence spans 383 residues: Putative [LysW]-aminoadipate semialdehyde/glutamate semialdehyde transaminase (383 aa).

Residues 97-98 (GT) and phenylalanine 124 contribute to the pyridoxal 5'-phosphate site. Arginine 127 serves as a coordination point for substrate. 209-212 (DEVQ) contacts pyridoxal 5'-phosphate. N6-(pyridoxal phosphate)lysine is present on lysine 238. Serine 266 contributes to the substrate binding site. Residue threonine 267 participates in pyridoxal 5'-phosphate binding.

Belongs to the class-III pyridoxal-phosphate-dependent aminotransferase family. LysJ subfamily. In terms of assembly, homodimer. Pyridoxal 5'-phosphate serves as cofactor.

The protein resides in the cytoplasm. It catalyses the reaction [amino-group carrier protein]-C-terminal-gamma-(L-lysyl)-L-glutamate + 2-oxoglutarate = [amino-group carrier protein]-C-terminal-N-(1-carboxy-5-oxopentan-1-yl)-L-glutamine + L-glutamate. It carries out the reaction [amino-group carrier protein]-C-terminal-gamma-(L-ornithyl)-L-glutamate + 2-oxoglutarate = [amino-group carrier protein]-C-terminal-gamma-(L-glutamyl-5-semialdehyde)-L-glutamate + L-glutamate. It functions in the pathway amino-acid biosynthesis; L-lysine biosynthesis via AAA pathway; L-lysine from L-alpha-aminoadipate (Thermus route): step 4/5. The protein operates within amino-acid biosynthesis; L-arginine biosynthesis. Involved in both the arginine and lysine biosynthetic pathways. This chain is Putative [LysW]-aminoadipate semialdehyde/glutamate semialdehyde transaminase, found in Pyrobaculum aerophilum (strain ATCC 51768 / DSM 7523 / JCM 9630 / CIP 104966 / NBRC 100827 / IM2).